The primary structure comprises 248 residues: MNQTNFGFKKVDYTKKQGLVNNVFSNVADKYDLMNDLMSLGLHRLWKDEFIRQIPNLNSHILDVASGSGDIALKLAKKARDRVNNISLTLSDINEEMLKQAKKKAIDLNLFQNLKFTVASAEELPFPDDSFDYYTIAFGIRNVPDINKALKEACRVLKPMGKFICLEFSKVKEGYIKDFYKFYSFNIIPSIGQMIAGNKEAYEYLVESIDLFPSQDEFRIMIKDAGFEEVGYKNLSGGIVAIHSAYTR.

S-adenosyl-L-methionine-binding residues include S68 and D92.

The protein belongs to the class I-like SAM-binding methyltransferase superfamily. MenG/UbiE family.

It carries out the reaction a 2-demethylmenaquinol + S-adenosyl-L-methionine = a menaquinol + S-adenosyl-L-homocysteine + H(+). It catalyses the reaction a 2-methoxy-6-(all-trans-polyprenyl)benzene-1,4-diol + S-adenosyl-L-methionine = a 5-methoxy-2-methyl-3-(all-trans-polyprenyl)benzene-1,4-diol + S-adenosyl-L-homocysteine + H(+). It functions in the pathway quinol/quinone metabolism; menaquinone biosynthesis; menaquinol from 1,4-dihydroxy-2-naphthoate: step 2/2. Its pathway is cofactor biosynthesis; ubiquinone biosynthesis. In terms of biological role, methyltransferase required for the conversion of demethylmenaquinol (DMKH2) to menaquinol (MKH2) and the conversion of 2-polyprenyl-6-methoxy-1,4-benzoquinol (DDMQH2) to 2-polyprenyl-3-methyl-6-methoxy-1,4-benzoquinol (DMQH2). The chain is Ubiquinone/menaquinone biosynthesis C-methyltransferase UbiE from Rickettsia rickettsii (strain Iowa).